The chain runs to 462 residues: Phosphoglycerate kinase, chloroplastic (462 aa).

The transit peptide at 1 to 61 (MALSMKMRAN…AGRSRIVVEA (61 aa)) directs the protein to the chloroplast. The (2R)-3-phosphoglycerate site is built by alanine 83, aspartate 84, asparagine 86, arginine 101, serine 123, histidine 124, glycine 126, arginine 127, arginine 183, histidine 215, and arginine 216. ADP is bound at residue glycine 261. Glycine 261 contributes to the CDP binding site. AMP-binding residues include lysine 263 and lysine 267. Residue lysine 267 participates in ATP binding. Glycine 285 is a binding site for ADP. Glycine 285 is a binding site for CDP. Residues glycine 286 and glycine 358 each coordinate AMP. 2 residues coordinate ATP: glycine 286 and glycine 358. CDP contacts are provided by glycine 383 and phenylalanine 388. ADP is bound at residue phenylalanine 388. Position 389 (glutamate 389) interacts with AMP. Residues glutamate 389, aspartate 420, and serine 421 each coordinate ATP. Residue aspartate 420 coordinates Mg(2+).

The protein belongs to the phosphoglycerate kinase family. As to quaternary structure, monomer. The cofactor is Mg(2+).

It is found in the plastid. The protein localises to the chloroplast. The catalysed reaction is (2R)-3-phosphoglycerate + ATP = (2R)-3-phospho-glyceroyl phosphate + ADP. It participates in carbohydrate biosynthesis; Calvin cycle. The protein is Phosphoglycerate kinase, chloroplastic (PGK) of Volvox carteri (Green alga).